The following is a 199-amino-acid chain: Imidazoleglycerol-phosphate dehydratase (199 aa).

The protein belongs to the imidazoleglycerol-phosphate dehydratase family.

It localises to the cytoplasm. The catalysed reaction is D-erythro-1-(imidazol-4-yl)glycerol 3-phosphate = 3-(imidazol-4-yl)-2-oxopropyl phosphate + H2O. Its pathway is amino-acid biosynthesis; L-histidine biosynthesis; L-histidine from 5-phospho-alpha-D-ribose 1-diphosphate: step 6/9. In Rhodospirillum rubrum (strain ATCC 11170 / ATH 1.1.1 / DSM 467 / LMG 4362 / NCIMB 8255 / S1), this protein is Imidazoleglycerol-phosphate dehydratase.